Reading from the N-terminus, the 280-residue chain is uncharacterized protein (280 aa).

2 disordered regions span residues 1–124 and 177–280; these read MPRD…QREA and LEEE…LSSK. 2 stretches are compositionally biased toward basic residues: residues 16 to 36 and 48 to 83; these read SRRR…RSRR and YSRR…RQKS. 2 stretches are compositionally biased toward basic and acidic residues: residues 102–124 and 182–259; these read AKNR…QREA and EASL…ERLK.

This is an uncharacterized protein from Arabidopsis thaliana (Mouse-ear cress).